Here is a 418-residue protein sequence, read N- to C-terminus: uncharacterized protein (418 aa).

One can recognise an N-acetyltransferase domain in the interval 7-158 (IDVRPIAEAE…TGLDPRWSGP (152 aa)). Acetyl-CoA is bound by residues 87–89 (VTV) and 95–100 (RRGLLT). Tyrosine 128 serves as the catalytic Proton donor. Phenylalanine 418 acts as the Proton acceptor; via carboxylate in catalysis.

It belongs to the acetyltransferase Eis family. Homohexamer; trimer of dimers.

This is an uncharacterized protein from Streptomyces avermitilis (strain ATCC 31267 / DSM 46492 / JCM 5070 / NBRC 14893 / NCIMB 12804 / NRRL 8165 / MA-4680).